The chain runs to 611 residues: Chaperone protein DnaK (611 aa).

Phosphothreonine; by autocatalysis is present on T173. Residues A579 to A592 show a composition bias toward low complexity. Positions A579–N598 are disordered.

This sequence belongs to the heat shock protein 70 family.

Functionally, acts as a chaperone. This Bacillus cereus (strain AH187) protein is Chaperone protein DnaK.